The chain runs to 866 residues: Probable outer membrane usher protein ElfC (866 aa).

Positions 1-35 are cleaved as a signal peptide; sequence MYRTHRQHSLLSSGGVPSFIGGLVVFVSAAFNAQA.

Belongs to the fimbrial export usher family.

The protein localises to the cell outer membrane. Its function is as follows. Part of the elfADCG-ycbUVF fimbrial operon, which promotes adhesion of bacteria to different abiotic surfaces. Could be involved in the export and assembly of the ElfA fimbrial subunits across the outer membrane. The protein is Probable outer membrane usher protein ElfC (elfC) of Escherichia coli (strain K12).